The chain runs to 264 residues: Thymidylate synthase (264 aa).

DUMP is bound by residues Arg-21 and 126–127 (RR). Catalysis depends on Cys-146, which acts as the Nucleophile. Residues 166-169 (RSAD), Asn-177, and 207-209 (HLY) each bind dUMP. Position 169 (Asp-169) interacts with (6R)-5,10-methylene-5,6,7,8-tetrahydrofolate. Ala-263 is a (6R)-5,10-methylene-5,6,7,8-tetrahydrofolate binding site.

The protein belongs to the thymidylate synthase family. Bacterial-type ThyA subfamily. In terms of assembly, homodimer.

The protein localises to the cytoplasm. The enzyme catalyses dUMP + (6R)-5,10-methylene-5,6,7,8-tetrahydrofolate = 7,8-dihydrofolate + dTMP. The protein operates within pyrimidine metabolism; dTTP biosynthesis. Catalyzes the reductive methylation of 2'-deoxyuridine-5'-monophosphate (dUMP) to 2'-deoxythymidine-5'-monophosphate (dTMP) while utilizing 5,10-methylenetetrahydrofolate (mTHF) as the methyl donor and reductant in the reaction, yielding dihydrofolate (DHF) as a by-product. This enzymatic reaction provides an intracellular de novo source of dTMP, an essential precursor for DNA biosynthesis. The protein is Thymidylate synthase of Rhodopseudomonas palustris (strain ATCC BAA-98 / CGA009).